Here is a 782-residue protein sequence, read N- to C-terminus: Endonuclease MutS2 (782 aa).

336–343 (GPNTGGKT) provides a ligand contact to ATP. Positions 707–782 (LDLRGYRYDE…GFGVTVVEIK (76 aa)) constitute a Smr domain.

The protein belongs to the DNA mismatch repair MutS family. MutS2 subfamily. As to quaternary structure, homodimer. Binds to stalled ribosomes, contacting rRNA.

Endonuclease that is involved in the suppression of homologous recombination and thus may have a key role in the control of bacterial genetic diversity. Functionally, acts as a ribosome collision sensor, splitting the ribosome into its 2 subunits. Detects stalled/collided 70S ribosomes which it binds and splits by an ATP-hydrolysis driven conformational change. Acts upstream of the ribosome quality control system (RQC), a ribosome-associated complex that mediates the extraction of incompletely synthesized nascent chains from stalled ribosomes and their subsequent degradation. Probably generates substrates for RQC. The chain is Endonuclease MutS2 from Staphylococcus saprophyticus subsp. saprophyticus (strain ATCC 15305 / DSM 20229 / NCIMB 8711 / NCTC 7292 / S-41).